The chain runs to 264 residues: ATP synthase subunit a (264 aa).

The next 6 helical transmembrane spans lie at 29 to 49, 87 to 107, 134 to 154, 177 to 197, 208 to 228, and 235 to 255; these read TWHI…LWIF, NALI…MNFM, DLNI…YYSI, IPVN…SLAL, LIFI…SLGV, and LIFH…LTIV.

This sequence belongs to the ATPase A chain family. As to quaternary structure, F-type ATPases have 2 components, CF(1) - the catalytic core - and CF(0) - the membrane proton channel. CF(1) has five subunits: alpha(3), beta(3), gamma(1), delta(1), epsilon(1). CF(0) has three main subunits: a(1), b(2) and c(9-12). The alpha and beta chains form an alternating ring which encloses part of the gamma chain. CF(1) is attached to CF(0) by a central stalk formed by the gamma and epsilon chains, while a peripheral stalk is formed by the delta and b chains.

The protein localises to the cell inner membrane. Key component of the proton channel; it plays a direct role in the translocation of protons across the membrane. In Shewanella amazonensis (strain ATCC BAA-1098 / SB2B), this protein is ATP synthase subunit a.